The sequence spans 512 residues: Annexin A7 (512 aa).

Residues 14–38 (GYPGGDPSYPPAAQQAFPGGQFPPA) show a composition bias toward low complexity. Disordered stretches follow at residues 14–62 (GYPG…GYPH) and 146–190 (GGFS…AQPT). Over residues 39–52 (AGGGAFPPASGGGN) the composition is skewed to gly residues. Residues 164 to 182 (MPGQMPGQMPGQAPSGYPS) are compositionally biased toward low complexity. 4 Annexin repeats span residues 209 to 279 (FDAL…ALFM), 280 to 351 (PSTY…SIMA), 364 to 436 (QQAE…AVLQ), and 440 to 511 (NRPL…AISG).

This sequence belongs to the annexin family.

Its function is as follows. Calcium/phospholipid-binding protein which promotes membrane fusion and is involved in exocytosis. The polypeptide is Annexin A7 (anxa7) (Xenopus laevis (African clawed frog)).